A 170-amino-acid polypeptide reads, in one-letter code: Fluoride-specific ion channel FluC 2 (170 aa).

4 helical membrane-spanning segments follow: residues Ala-8–Ile-28, Ile-55–Ile-75, Thr-84–Val-104, and Ile-114–Met-134. Gly-92 and Thr-95 together coordinate Na(+).

The protein belongs to the fluoride channel Fluc/FEX (TC 1.A.43) family.

It localises to the cell membrane. The catalysed reaction is fluoride(in) = fluoride(out). Na(+) is not transported, but it plays an essential structural role and its presence is essential for fluoride channel function. Fluoride-specific ion channel. Important for reducing fluoride concentration in the cell, thus reducing its toxicity. The polypeptide is Fluoride-specific ion channel FluC 2 (Corynebacterium jeikeium (strain K411)).